The sequence spans 101 residues: Citrate lyase acyl carrier protein (101 aa).

At Ser-14 the chain carries O-(phosphoribosyl dephospho-coenzyme A)serine.

The protein belongs to the CitD family. Oligomer with a subunit composition of (alpha,beta,gamma)6.

It is found in the cytoplasm. Covalent carrier of the coenzyme of citrate lyase. The sequence is that of Citrate lyase acyl carrier protein from Clostridium perfringens (strain 13 / Type A).